Consider the following 495-residue polypeptide: Carbohydrate oxidase (495 aa).

The first 22 residues, Met-1 to Arg-22, serve as a signal peptide directing secretion. Residues Leu-55–Ala-229 enclose the FAD-binding PCMH-type domain. Residues His-92 to Cys-154 constitute a cross-link (6-(S-cysteinyl)-8alpha-(pros-histidyl)-FAD (His-Cys)). 2 N-linked (GlcNAc...) asparagine glycosylation sites follow: Asn-244 and Asn-417.

It belongs to the oxygen-dependent FAD-linked oxidoreductase family. The cofactor is FAD. The FAD cofactor is bound via a bicovalent 6-S-cysteinyl, 8alpha-N1-histidyl FAD linkage.

The protein localises to the secreted. It catalyses the reaction beta-D-glucose + O2 = D-glucono-1,5-lactone + H2O2. The enzyme catalyses D-galactose + O2 = D-galactono-1,5-lactone + H2O2. It carries out the reaction D-cellobiose + O2 = D-cellobiono-1,5-lactone + H2O2. The catalysed reaction is beta-lactose + O2 = lactobiono-1,5-lactone + H2O2. It catalyses the reaction D-maltose + O2 = D-maltobiono-1,5-lactone + H2O2. The enzyme catalyses D-xylose + O2 = D-xylono-1,5-lactone + H2O2. Its function is as follows. Catalyzes the selective oxidation of C1 hydroxyl moieties on mono-, oligo- and polysaccharides with concomitant reduction of molecular oxygen to hydrogen peroxide. This results in the formation of the corresponding lactones, which typically undergo spontaneous hydrolysis. Carbohydrate oxidase is able to oxidize a variety of substrates including D-glucose, D-galactose, D-xylose, D-maltose, D-cellobiose, and lactose. In addition, among various oligosaccharides, the enzyme preferred tetrameric dextrins, indicating a favorable interaction of four linked glucose units with the substrate binding pocket. The polypeptide is Carbohydrate oxidase (Microdochium nivale (Pink snow mold)).